A 118-amino-acid chain; its full sequence is UPF0102 protein Nwi_0116 (118 aa).

This sequence belongs to the UPF0102 family.

The sequence is that of UPF0102 protein Nwi_0116 from Nitrobacter winogradskyi (strain ATCC 25391 / DSM 10237 / CIP 104748 / NCIMB 11846 / Nb-255).